The sequence spans 421 residues: GTPase Obg (421 aa).

Residues 1–158 enclose the Obg domain; the sequence is MYFIDEAINE…FKIKTELKIL (158 aa). The OBG-type G domain occupies 159 to 324; it reads ADVGLIGYPS…LKYKMLEMIK (166 aa). Residues 165–172, 190–194, 211–214, 278–281, and 305–307 contribute to the GTP site; these read GYPSVGKS, FTTLK, DLPG, NKMD, and SLL. Positions 172 and 192 each coordinate Mg(2+). Residues 342-421 form the OCT domain; sequence TLEEEKPDFV…ICDRVFEFIT (80 aa).

This sequence belongs to the TRAFAC class OBG-HflX-like GTPase superfamily. OBG GTPase family. In terms of assembly, monomer. It depends on Mg(2+) as a cofactor.

The protein resides in the cytoplasm. In terms of biological role, an essential GTPase which binds GTP, GDP and possibly (p)ppGpp with moderate affinity, with high nucleotide exchange rates and a fairly low GTP hydrolysis rate. Plays a role in control of the cell cycle, stress response, ribosome biogenesis and in those bacteria that undergo differentiation, in morphogenesis control. This is GTPase Obg from Phytoplasma mali (strain AT).